The following is a 143-amino-acid chain: Small ribosomal subunit protein eS19y (143 aa).

It belongs to the eukaryotic ribosomal protein eS19 family.

This is Small ribosomal subunit protein eS19y (RPS19B) from Arabidopsis thaliana (Mouse-ear cress).